The primary structure comprises 416 residues: Glutamyl-tRNA reductase (416 aa).

Substrate is bound by residues 49-52 (TCNR), S105, 110-112 (ETQ), and Q116. C50 acts as the Nucleophile in catalysis. 185–190 (GAGEMI) provides a ligand contact to NADP(+).

Belongs to the glutamyl-tRNA reductase family. As to quaternary structure, homodimer.

The enzyme catalyses (S)-4-amino-5-oxopentanoate + tRNA(Glu) + NADP(+) = L-glutamyl-tRNA(Glu) + NADPH + H(+). It functions in the pathway porphyrin-containing compound metabolism; protoporphyrin-IX biosynthesis; 5-aminolevulinate from L-glutamyl-tRNA(Glu): step 1/2. Its function is as follows. Catalyzes the NADPH-dependent reduction of glutamyl-tRNA(Glu) to glutamate 1-semialdehyde (GSA). This Thiobacillus denitrificans (strain ATCC 25259 / T1) protein is Glutamyl-tRNA reductase.